A 354-amino-acid polypeptide reads, in one-letter code: Guanine nucleotide-binding protein G(t) subunit alpha-3 (354 aa).

The disordered stretch occupies residues methionine 1 to aspartate 26. The N-myristoyl glycine moiety is linked to residue glycine 2. The segment covering glutamate 8–aspartate 26 has biased composition (basic and acidic residues). Residues arginine 32–phenylalanine 354 enclose the G-alpha domain. The G1 motif stretch occupies residues lysine 35–threonine 48. GTP is bound by residues glycine 40 to serine 47, leucine 175 to threonine 181, aspartate 200 to glutamine 204, asparagine 269 to aspartate 272, and alanine 326. Positions 47 and 181 each coordinate Mg(2+). The interval aspartate 173 to threonine 181 is G2 motif. Positions phenylalanine 196–arginine 205 are G3 motif. Residues valine 265–aspartate 272 form a G4 motif region. A G5 motif region spans residues threonine 324 to threonine 329.

Belongs to the G-alpha family. G(i/o/t/z) subfamily. G proteins are composed of 3 units; alpha, beta and gamma, respectively GNAT3, GNB1 and GNG13 for Gustducin heterotrimer for bitter taste transduction. The alpha chain contains the guanine nucleotide binding site. Component of the TAS2R14-GNAT3 complex, consisting of TAS2R14, GNAT3, GNB1 and GNG2; within the complex interacts with TAS2R14; this complex plays a role in the perception of bitterness. Gustducin heterotrimer may also be composed of GNAT3, GNB3 and GNG13. As to expression, expressed in epithelial cells of taste buds of the circumvallate, foliate and fungiform. Detected in various region of the respiratory track. Expressed also in spermatozoa.

It is found in the cytoplasm. In terms of biological role, guanine nucleotide-binding protein (G protein) alpha subunit playing a prominent role in bitter and sweet taste transduction as well as in umami (monosodium glutamate, monopotassium glutamate, and inosine monophosphate) taste transduction. The chain is Guanine nucleotide-binding protein G(t) subunit alpha-3 (GNAT3) from Bos taurus (Bovine).